The chain runs to 597 residues: Aspartate--tRNA(Asp/Asn) ligase (597 aa).

Glu182 contributes to the L-aspartate binding site. Residues 206 to 209 form an aspartate region; it reads QLFK. An L-aspartate-binding site is contributed by Arg228. ATP is bound by residues 228–230 and Gln237; that span reads RDE. An L-aspartate-binding site is contributed by His455. ATP is bound at residue Glu489. Arg496 contributes to the L-aspartate binding site. Position 541–544 (541–544) interacts with ATP; the sequence is GFDR.

This sequence belongs to the class-II aminoacyl-tRNA synthetase family. Type 1 subfamily. As to quaternary structure, homodimer.

It localises to the cytoplasm. The catalysed reaction is tRNA(Asx) + L-aspartate + ATP = L-aspartyl-tRNA(Asx) + AMP + diphosphate. In terms of biological role, aspartyl-tRNA synthetase with relaxed tRNA specificity since it is able to aspartylate not only its cognate tRNA(Asp) but also tRNA(Asn). Reaction proceeds in two steps: L-aspartate is first activated by ATP to form Asp-AMP and then transferred to the acceptor end of tRNA(Asp/Asn). The chain is Aspartate--tRNA(Asp/Asn) ligase from Desulfosudis oleivorans (strain DSM 6200 / JCM 39069 / Hxd3) (Desulfococcus oleovorans).